The primary structure comprises 604 residues: Procollagen galactosyltransferase 1 (604 aa).

The first 18 residues, 1 to 18 (MHLLCFFFLLLWTGPARS), serve as a signal peptide directing secretion. N-linked (GlcNAc...) asparagine glycosylation is found at Asn78, Asn166, Asn363, and Asn561. The segment covering 570–580 (RARSRKSREQE) has biased composition (basic and acidic residues). The interval 570-604 (RARSRKSREQEELSSEAQNTDVLQSPLDSTARDEL) is disordered. The span at 584-597 (SEAQNTDVLQSPLD) shows a compositional bias: polar residues. Positions 601–604 (RDEL) match the Prevents secretion from ER motif.

This sequence belongs to the glycosyltransferase 25 family.

It is found in the endoplasmic reticulum lumen. The enzyme catalyses (5R)-5-hydroxy-L-lysyl-[collagen] + UDP-alpha-D-galactose = (5R)-5-O-(beta-D-galactosyl)-5-hydroxy-L-lysyl-[collagen] + UDP + H(+). Functionally, beta-galactosyltransferase that transfers beta-galactose to hydroxylysine residues of type I collagen. By acting on collagen glycosylation, facilitates the formation of collagen triple helix. This Danio rerio (Zebrafish) protein is Procollagen galactosyltransferase 1 (colgalt1).